We begin with the raw amino-acid sequence, 280 residues long: Protease HtpX (280 aa).

2 consecutive transmembrane segments (helical) span residues 7–26 (TFILLASLTALLVVIGGLLG) and 30–49 (GMLVALLFAGIMNFSAYWYS). Position 129 (H129) interacts with Zn(2+). E130 is a catalytic residue. H133 contacts Zn(2+). The next 2 helical transmembrane spans lie at 146 to 166 (ATIAGAISGIANMFMWLSMFG) and 178 to 198 (VVGMIMMIVAPLAAGLIQMAI). E203 lines the Zn(2+) pocket.

It belongs to the peptidase M48B family. Requires Zn(2+) as cofactor.

It localises to the cell inner membrane. The protein is Protease HtpX of Legionella pneumophila (strain Lens).